The chain runs to 198 residues: Ras-related protein Rab-34, isoform NARR (198 aa).

Repeat copies occupy residues 7–15, 16–24, 25–33, 34–42, 43–51, 52–60, 61–69, 70–78, 79–87, 88–96, 97–105, 106–114, and 115–123. Residues 7 to 125 are 13 x 9 AA approximate tandem-repeats of P-R-V-I-V-G-(S/T)-P-R; the sequence is PRDDVGSPRP…RPRVIVGSPR (119 aa). A Phosphoserine modification is found at Ser13. Positions 37–64 are disordered; sequence IVGSARARPPPDGTPRPQLAAEESPRPR. Thr69 is modified (phosphothreonine). A phosphoserine mark is found at Ser78, Ser87, and Ser96. Positions 94–121 are enriched in low complexity; that stretch reads VASPRPRTPVGSPWPRVVVGTPRPRVIV. Positions 94–198 are disordered; that stretch reads VASPRPRTPV…GAPDRHRGQI (105 aa). At Ser123 the chain carries Phosphoserine. The segment covering 145 to 157 has biased composition (basic and acidic residues); that stretch reads RRQDEHSGTRAEG. Residues 161 to 178 show a composition bias toward low complexity; that stretch reads GGAAPVPEEGGRFARAQR.

As to quaternary structure, may interact with EIF5A and ERF1. Post-translationally, phosphorylated during M-phase.

It is found in the nucleus. The protein localises to the nucleolus. The polypeptide is Ras-related protein Rab-34, isoform NARR (RAB34) (Homo sapiens (Human)).